A 450-amino-acid polypeptide reads, in one-letter code: Glutathione reductase (450 aa).

Positions 14, 15, 34, 41, 42, and 50 each coordinate FAD. Residue Ser14 participates in glutathione binding. A disulfide bridge connects residues Cys42 and Cys47. Tyr99 contributes to the glutathione binding site. Ala115 contacts FAD. Residues Ala175, Ile178, Glu181, Arg198, Arg204, and Gly262 each contribute to the NADP(+) site. An FAD-binding site is contributed by Asp303. Glu309 serves as a coordination point for NADP(+). Thr311 contributes to the FAD binding site. Arg319 is a binding site for glutathione. Val342 is an NADP(+) binding site. His439 is an FAD binding site. Catalysis depends on His439, which acts as the Proton acceptor.

Belongs to the class-I pyridine nucleotide-disulfide oxidoreductase family. As to quaternary structure, homodimer. FAD is required as a cofactor.

The protein localises to the cytoplasm. The catalysed reaction is 2 glutathione + NADP(+) = glutathione disulfide + NADPH + H(+). Functionally, catalyzes the reduction of glutathione disulfide (GSSG) to reduced glutathione (GSH). Constitutes the major mechanism to maintain a high GSH:GSSG ratio in the cytosol. This is Glutathione reductase (gor) from Escherichia coli (strain K12).